A 129-amino-acid polypeptide reads, in one-letter code: Acyl carrier protein 2, chloroplastic (129 aa).

A chloroplast-targeting transit peptide spans 1–49 (MASAAASAVSFARPVKAICVNSVSFSALRKDNVSFRLQPVPQRFSVCCA). One can recognise a Carrier domain in the interval 52–127 (KETVEKVCDI…DAANLIDSLV (76 aa)). At serine 87 the chain carries O-(pantetheine 4'-phosphoryl)serine.

This sequence belongs to the acyl carrier protein (ACP) family. Post-translationally, 4'-phosphopantetheine is transferred from CoA to a specific serine of apo-ACP by acpS. This modification is essential for activity because fatty acids are bound in thioester linkage to the sulfhydryl of the prosthetic group.

Its subcellular location is the plastid. It localises to the chloroplast. Its pathway is lipid metabolism; fatty acid biosynthesis. Functionally, carrier of the growing fatty acid chain in fatty acid biosynthesis. The polypeptide is Acyl carrier protein 2, chloroplastic (ACL1.2) (Hordeum vulgare (Barley)).